Here is a 533-residue protein sequence, read N- to C-terminus: E3 ubiquitin-protein ligase MGRN1 (533 aa).

Gly-2 carries the N-myristoyl glycine lipid modification. The RING-type zinc-finger motif lies at Glu-278 to Cys-317. The short motif at Pro-385–Pro-388 is the Required for TSG101-binding element. Tyr-390 is modified (phosphotyrosine). Residues Gln-421 to Leu-519 are disordered. The span at Gly-423–Ser-439 shows a compositional bias: polar residues. A phosphoserine mark is found at Ser-429, Ser-450, and Ser-502. Residues Glu-443–Glu-454 are compositionally biased toward acidic residues.

In terms of assembly, interacts with MC1R and MC4R. Interacts with TSG101. Interacts with mislocalized cytosolically exposed PRNP; this interaction alters MGRN1 subcellular location and causes lysosomal enlargement. In terms of processing, autoubiquitinated in vitro.

The protein resides in the cytoplasm. The protein localises to the cytosol. It localises to the cell membrane. It is found in the early endosome. The catalysed reaction is S-ubiquitinyl-[E2 ubiquitin-conjugating enzyme]-L-cysteine + [acceptor protein]-L-lysine = [E2 ubiquitin-conjugating enzyme]-L-cysteine + N(6)-ubiquitinyl-[acceptor protein]-L-lysine.. It functions in the pathway protein modification; protein ubiquitination. Its function is as follows. E3 ubiquitin-protein ligase. Mediates TSG101 monoubiquitination at multiple sites. Plays a role in the regulation of endosome-to-lysosome trafficking. Impairs MC1R- and MC4R-signaling by competing with GNAS-binding to MCRs and inhibiting agonist-induced cAMP production. Does not inhibit ADRB2-signaling. Does not promote MC1R ubiquitination. Also acts as a negative regulator of hedgehog signaling. This chain is E3 ubiquitin-protein ligase MGRN1 (Mgrn1), found in Rattus norvegicus (Rat).